The sequence spans 320 residues: Beta-ketoacyl-[acyl-carrier-protein] synthase III (320 aa).

Residues Cys-114 and His-247 contribute to the active site. The tract at residues 248–252 (QANRR) is ACP-binding. Residue Asn-277 is part of the active site.

The protein belongs to the thiolase-like superfamily. FabH family. As to quaternary structure, homodimer.

Its subcellular location is the cytoplasm. It carries out the reaction malonyl-[ACP] + acetyl-CoA + H(+) = 3-oxobutanoyl-[ACP] + CO2 + CoA. It functions in the pathway lipid metabolism; fatty acid biosynthesis. Catalyzes the condensation reaction of fatty acid synthesis by the addition to an acyl acceptor of two carbons from malonyl-ACP. Catalyzes the first condensation reaction which initiates fatty acid synthesis and may therefore play a role in governing the total rate of fatty acid production. Possesses both acetoacetyl-ACP synthase and acetyl transacylase activities. Its substrate specificity determines the biosynthesis of branched-chain and/or straight-chain of fatty acids. This chain is Beta-ketoacyl-[acyl-carrier-protein] synthase III, found in Neisseria meningitidis serogroup A / serotype 4A (strain DSM 15465 / Z2491).